The chain runs to 576 residues: Low-affinity glucose transporter HXT4 (576 aa).

The interval 1-56 is disordered; that stretch reads MSEEAAYQEDTAVQNTPADALSPVESDSNSALSTPSNKAERDDMKDFDENHEESNN. Residues 1–66 are Cytoplasmic-facing; it reads MSEEAAYQED…YVEIPKKPAS (66 aa). Positions 25–37 are enriched in polar residues; sequence ESDSNSALSTPSN. The span at 38–54 shows a compositional bias: basic and acidic residues; sequence KAERDDMKDFDENHEES. Residue Lys-45 forms a Glycyl lysine isopeptide (Lys-Gly) (interchain with G-Cter in ubiquitin) linkage. A helical transmembrane segment spans residues 67-87; it reads AYVTVSICCLMVAFGGFVFGW. The Extracellular portion of the chain corresponds to 88-122; the sequence is DTGTISGFVAQTDFIRRFGMKHHDGTYYLSKVRTG. The chain crosses the membrane as a helical span at residues 123 to 143; the sequence is LIVSIFNIGCAIGGIILAKLG. Residues 144–149 are Cytoplasmic-facing; the sequence is DMYGRK. Residues 150-170 traverse the membrane as a helical segment; the sequence is MGLIVVVVIYIIGIIIQIASI. Over 171 to 180 the chain is Extracellular; it reads NKWYQYFIGR. The helical transmembrane segment at 181 to 201 threads the bilayer; the sequence is IISGLGVGGIAVLSPMLISEV. Topologically, residues 202-207 are cytoplasmic; it reads SPKHIR. The helical transmembrane segment at 208-228 threads the bilayer; sequence GTLVSCYQLMITLGIFLGYCT. Residues 229 to 242 lie on the Extracellular side of the membrane; the sequence is NYGTKTYTNSVQWR. Residues 243 to 263 traverse the membrane as a helical segment; sequence VPLGLGFAWALFMIGGMTFVP. Topologically, residues 264 to 346 are cytoplasmic; sequence ESPRYLVEVG…IQSLQQLTGD (83 aa). The chain crosses the membrane as a helical span at residues 347-363; the sequence is NYFFYYGTTVFTAVGLE. Residues 364-369 lie on the Extracellular side of the membrane; sequence DSFETS. A helical transmembrane segment spans residues 370 to 387; the sequence is IVLGIVNFASTFVGIFLV. Residues 388–394 are Cytoplasmic-facing; the sequence is ERYGRRR. The helical transmembrane segment at 395–415 threads the bilayer; sequence CLLWGAASMTACMVVFASVGV. At 416–437 the chain is on the extracellular side; the sequence is TRLWPNGKKNGSSKGAGNCMIV. N-linked (GlcNAc...) asparagine glycosylation occurs at Asn-425. A helical membrane pass occupies residues 438–458; the sequence is FTCFYLFCFATTWAPIPFVVN. At 459 to 475 the chain is on the cytoplasmic side; sequence SETFPLRVKSKCMAIAQ. The chain crosses the membrane as a helical span at residues 476-496; the sequence is ACNWIWGFLIGFFTPFISGAI. A topological domain (extracellular) is located at residue Asp-497. The chain crosses the membrane as a helical span at residues 498-518; it reads FYYGYVFMGCLVFSYFYVFFF. At 519 to 576 the chain is on the cytoplasmic side; the sequence is VPETKGLTLEEVNTLWEEGVLPWKSPSWVPPNKRGTDYNADDLMHDDQPFYKKMFGKK.

This sequence belongs to the major facilitator superfamily. Sugar transporter (TC 2.A.1.1) family.

The protein localises to the cell membrane. Xylose uptake is strongly inhibited by glucose. Low-affinity glucose transporter. Can also transport xylose. The sequence is that of Low-affinity glucose transporter HXT4 (HXT4) from Saccharomyces cerevisiae (strain ATCC 204508 / S288c) (Baker's yeast).